The primary structure comprises 698 residues: Probable Xaa-Pro aminopeptidase P (698 aa).

D509, D520, E604, and E618 together coordinate Mn(2+).

Belongs to the peptidase M24B family. The cofactor is Mn(2+).

The enzyme catalyses Release of any N-terminal amino acid, including proline, that is linked to proline, even from a dipeptide or tripeptide.. In terms of biological role, catalyzes the removal of a penultimate prolyl residue from the N-termini of peptides. This is Probable Xaa-Pro aminopeptidase P (AMPP) from Arthroderma benhamiae (strain ATCC MYA-4681 / CBS 112371) (Trichophyton mentagrophytes).